The primary structure comprises 233 residues: Orotidine 5'-phosphate decarboxylase (233 aa).

Residues Asp-13, Lys-35, 62 to 71 (DLKFHDIPNT), Thr-122, Arg-182, Gln-191, Gly-211, and Arg-212 each bind substrate. Residue Lys-64 is the Proton donor of the active site.

This sequence belongs to the OMP decarboxylase family. Type 1 subfamily. Homodimer.

It catalyses the reaction orotidine 5'-phosphate + H(+) = UMP + CO2. It participates in pyrimidine metabolism; UMP biosynthesis via de novo pathway; UMP from orotate: step 2/2. Catalyzes the decarboxylation of orotidine 5'-monophosphate (OMP) to uridine 5'-monophosphate (UMP). In Pseudomonas putida (strain GB-1), this protein is Orotidine 5'-phosphate decarboxylase.